We begin with the raw amino-acid sequence, 521 residues long: GMP synthase [glutamine-hydrolyzing] (521 aa).

Residues 5 to 197 (KILILDFGSQ…VLDICGAQPG (193 aa)) enclose the Glutamine amidotransferase type-1 domain. The active-site Nucleophile is Cys-81. Active-site residues include His-171 and Glu-173. The GMPS ATP-PPase domain occupies 198 to 390 (WTMPNYIEEA…LGLPREMVYR (193 aa)). Position 225-231 (225-231 (SGGVDSS)) interacts with ATP.

As to quaternary structure, homodimer.

The catalysed reaction is XMP + L-glutamine + ATP + H2O = GMP + L-glutamate + AMP + diphosphate + 2 H(+). It functions in the pathway purine metabolism; GMP biosynthesis; GMP from XMP (L-Gln route): step 1/1. Its function is as follows. Catalyzes the synthesis of GMP from XMP. The sequence is that of GMP synthase [glutamine-hydrolyzing] (guaA) from Neisseria meningitidis serogroup B (strain ATCC BAA-335 / MC58).